Consider the following 215-residue polypeptide: Cytochrome b6 (215 aa).

The chain crosses the membrane as a helical span at residues 32-52 (IFYCLGGITLVCFLIQFATGF). A heme c-binding site is contributed by Cys-35. Residues His-86 and His-100 each coordinate heme b. Helical transmembrane passes span 90-110 (ASMM…TGGF), 116-136 (LTWV…VTGY), and 186-206 (LHTF…FLMI). Heme b contacts are provided by His-187 and His-202.

Belongs to the cytochrome b family. PetB subfamily. The 4 large subunits of the cytochrome b6-f complex are cytochrome b6, subunit IV (17 kDa polypeptide, PetD), cytochrome f and the Rieske protein, while the 4 small subunits are PetG, PetL, PetM and PetN. The complex functions as a dimer. It depends on heme b as a cofactor. The cofactor is heme c.

It is found in the cellular thylakoid membrane. Component of the cytochrome b6-f complex, which mediates electron transfer between photosystem II (PSII) and photosystem I (PSI), cyclic electron flow around PSI, and state transitions. This chain is Cytochrome b6, found in Synechococcus sp. (strain JA-3-3Ab) (Cyanobacteria bacterium Yellowstone A-Prime).